We begin with the raw amino-acid sequence, 164 residues long: Peptidyl-prolyl cis-trans isomerase A-like 4H (164 aa).

Residues 7 to 163 (FFDITVDGKP…KKITIADCGQ (157 aa)) form the PPIase cyclophilin-type domain. Asparagine 71 and asparagine 108 each carry an N-linked (GlcNAc...) asparagine glycan.

Belongs to the cyclophilin-type PPIase family. PPIase A subfamily.

It localises to the cytoplasm. It catalyses the reaction [protein]-peptidylproline (omega=180) = [protein]-peptidylproline (omega=0). Functionally, PPIases accelerate the folding of proteins. It catalyzes the cis-trans isomerization of proline imidic peptide bonds in oligopeptides. This Homo sapiens (Human) protein is Peptidyl-prolyl cis-trans isomerase A-like 4H.